Reading from the N-terminus, the 323-residue chain is Ferrochelatase (323 aa).

Positions 195 and 276 each coordinate Fe cation.

It belongs to the ferrochelatase family.

The protein resides in the cytoplasm. The catalysed reaction is heme b + 2 H(+) = protoporphyrin IX + Fe(2+). It functions in the pathway porphyrin-containing compound metabolism; protoheme biosynthesis; protoheme from protoporphyrin-IX: step 1/1. In terms of biological role, catalyzes the ferrous insertion into protoporphyrin IX. This chain is Ferrochelatase, found in Mannheimia succiniciproducens (strain KCTC 0769BP / MBEL55E).